Here is a 63-residue protein sequence, read N- to C-terminus: LPSLSADAEAPSKIDTAYYNGTKTXXAPVYQYQFGVGXIEXLTYVFKGSQYQDIESPTAYQSK.

The N-linked (GlcNAc...) asparagine glycan is linked to Asn20.

The protein belongs to the type-B carboxylesterase/lipase family. Fat body, the site of their biosynthesis, and the hemolymph where it is secreted.

The enzyme catalyses juvenile hormone I + H2O = juvenile hormone I carboxylate + methanol + H(+). It carries out the reaction juvenile hormone III + H2O = juvenile hormone III carboxylate + methanol + H(+). Functionally, JH esterase plays a crucial role in the decrease of JH activity in lepidopteran insects, by hydrolyzing the methyl ester of JH. It is also involved in the transport of JH. This chain is Juvenile hormone esterase, isoform B, found in Trichoplusia ni (Cabbage looper).